The chain runs to 266 residues: uncharacterized protein (266 aa).

The signal sequence occupies residues 1–22 (MGYFKRVVLYIIVMVVSVFIIG). C23 carries the N-palmitoyl cysteine lipid modification. Residue C23 is the site of S-diacylglycerol cysteine attachment.

The protein belongs to the staphylococcal tandem lipoprotein family.

It is found in the cell membrane. This is an uncharacterized protein from Staphylococcus aureus (strain N315).